Consider the following 334-residue polypeptide: Broad-range acid phosphatase DET1 (334 aa).

Residue His32 is the Tele-phosphohistidine intermediate of the active site. Substrate is bound by residues Asn38, 44-45 (NG), and Arg108. The active-site Proton donor/acceptor is Glu126. Substrate is bound by residues 168–171 (LNNT) and 195–205 (RVKDEPRIREQ). Ser248 is subject to Phosphoserine.

This sequence belongs to the phosphoglycerate mutase family.

Its subcellular location is the cytoplasm. The protein resides in the nucleus. Metal-independent, broad-range acid phosphatase. Involved, either directly or indirectly, in the bidirectional transport of sterols between the endoplasmic reticulum and the plasma membrane. This is Broad-range acid phosphatase DET1 (DET1) from Saccharomyces cerevisiae (strain ATCC 204508 / S288c) (Baker's yeast).